The following is a 143-amino-acid chain: Ribosome maturation factor RimP (143 aa).

It belongs to the RimP family.

The protein localises to the cytoplasm. Functionally, required for maturation of 30S ribosomal subunits. The chain is Ribosome maturation factor RimP from Borrelia turicatae (strain 91E135).